We begin with the raw amino-acid sequence, 204 residues long: High frequency lysogenization protein HflD homolog (204 aa).

This sequence belongs to the HflD family.

Its subcellular location is the cytoplasm. It localises to the cell inner membrane. The polypeptide is High frequency lysogenization protein HflD homolog (Xylella fastidiosa (strain M23)).